We begin with the raw amino-acid sequence, 180 residues long: UPF0227 protein YE1706 (180 aa).

The protein belongs to the UPF0227 family.

The chain is UPF0227 protein YE1706 from Yersinia enterocolitica serotype O:8 / biotype 1B (strain NCTC 13174 / 8081).